The sequence spans 975 residues: MAEHGHNMWEEEPSKGRDSLDSDSSASTTSLVFDQISERVAAESGTTKGKRMRYGHDEADLGARLSELDDEDPLKDEASGDYDLETGPFLGGHGHNSNHDGLSAASGSAGKTQGGYRMMDRGLRRVLIIASLVFVTAWVGGLFIYISHKSYLHGSEFEHDPQATVSRGSLRKITREQVDNGFWRPVKASIAWVAGPAGEDGLLLETNASGASDKAYLTVQDVRSLQQGLDASTEAAVAAARRTLVEKSTFTFAGKTYRIGSSKASKDMSKVLLGVDVQSNWRHSSTAAYFILEVATQTVQPLIPGEVSARVQLAQWSPQSDAIAFTRDNNLYFRQVVAGSSSSAEDADSVIKQITTDGGPELFYGVPDWVYEEEVLGGASATWWSPDGRYIAFLRTNETGVPEYPVQYFLHRPSGAAPAEGEENYPEVRQIKYPKAGAHNPVVDLQFFDVGRGDSFSVAVSGEFADENRLITTVLWAGAQKVLVKETNRVSTVMRVVVVDVAARSGQAVRTVDVGAIDGGWFEISQRTRFIPADPARQRPDDGYIDTIVHNNGDHLAYFSPPENPEPIMLTAGPDWEVDDAPAAVDLERNLVYFLATIQGITQRHLYSVRLLDGGGLSPLTNTSEPGFYGASFSAGVGAGYVLLEYGGPNIPWQKVMNTPAAAAAAAAGSADVSKQMPFVHVLEDNHELAERARQYALPLLVRGTFDVKGHDEGVGAGKLNYLERRPPHFDPSKKYPVLFQQYSGPGSQEVTHEFSVDFQSYVAASLGYVVVTVDPRGTGFAGRSNRVVVRGRLGVVESHDHIAAAQHWASLPYIDGDRLAIWGWSYGGFTTLKTLEQDAGRTFRYGIAVAPVTDWRFYDSVYTERYMDTPQANAVGYDTGAVTNASALAQNVRFLIMHGIADDNVHLQNSLALLDRLDIEGVSNYDVHVFPDSDHSIYFHNGRQIVYDKLENWLINAFNGEWLKIDNAKPQGKR.

Residues 1–20 are compositionally biased toward basic and acidic residues; that stretch reads MAEHGHNMWEEEPSKGRDSL. The tract at residues 1 to 111 is disordered; it reads MAEHGHNMWE…LSAASGSAGK (111 aa). Residues 1–125 are Cytoplasmic-facing; the sequence is MAEHGHNMWE…YRMMDRGLRR (125 aa). Residues 22–31 are compositionally biased toward low complexity; the sequence is SDSSASTTSL. The segment covering 68-84 has biased composition (acidic residues); sequence LDDEDPLKDEASGDYDL. Residues 126–146 traverse the membrane as a helical; Signal-anchor for type II membrane protein segment; it reads VLIIASLVFVTAWVGGLFIYI. The Vacuolar portion of the chain corresponds to 147 to 975; it reads SHKSYLHGSE…IDNAKPQGKR (829 aa). N-linked (GlcNAc...) asparagine glycosylation is found at asparagine 207, asparagine 397, and asparagine 622. Catalysis depends on serine 826, which acts as the Charge relay system. Asparagine 885 carries an N-linked (GlcNAc...) asparagine glycan. Active-site charge relay system residues include aspartate 903 and histidine 936.

Belongs to the peptidase S9B family.

The protein localises to the vacuole membrane. It carries out the reaction Release of an N-terminal dipeptide, Xaa-Yaa-|-Zaa-, from a polypeptide, preferentially when Yaa is Pro, provided Zaa is neither Pro nor hydroxyproline.. Functionally, type IV dipeptidyl-peptidase which removes N-terminal dipeptides sequentially from polypeptides having unsubstituted N-termini provided that the penultimate residue is proline. The chain is Probable dipeptidyl-aminopeptidase B (DAPB) from Grosmannia clavigera (strain kw1407 / UAMH 11150) (Blue stain fungus).